A 486-amino-acid polypeptide reads, in one-letter code: Protein nucleotidyltransferase YdiU (486 aa).

8 residues coordinate ATP: Gly90, Gly92, Arg93, Lys113, Asp125, Gly126, Arg176, and Arg183. Residue Asp252 is the Proton acceptor of the active site. 2 residues coordinate Mg(2+): Asn253 and Asp262. An ATP-binding site is contributed by Asp262.

The protein belongs to the SELO family. The cofactor is Mg(2+). It depends on Mn(2+) as a cofactor.

The enzyme catalyses L-seryl-[protein] + ATP = 3-O-(5'-adenylyl)-L-seryl-[protein] + diphosphate. It carries out the reaction L-threonyl-[protein] + ATP = 3-O-(5'-adenylyl)-L-threonyl-[protein] + diphosphate. The catalysed reaction is L-tyrosyl-[protein] + ATP = O-(5'-adenylyl)-L-tyrosyl-[protein] + diphosphate. It catalyses the reaction L-histidyl-[protein] + UTP = N(tele)-(5'-uridylyl)-L-histidyl-[protein] + diphosphate. The enzyme catalyses L-seryl-[protein] + UTP = O-(5'-uridylyl)-L-seryl-[protein] + diphosphate. It carries out the reaction L-tyrosyl-[protein] + UTP = O-(5'-uridylyl)-L-tyrosyl-[protein] + diphosphate. Nucleotidyltransferase involved in the post-translational modification of proteins. It can catalyze the addition of adenosine monophosphate (AMP) or uridine monophosphate (UMP) to a protein, resulting in modifications known as AMPylation and UMPylation. The protein is Protein nucleotidyltransferase YdiU of Pseudomonas paraeruginosa (strain DSM 24068 / PA7) (Pseudomonas aeruginosa (strain PA7)).